The sequence spans 147 residues: 3-dehydroquinate dehydratase (147 aa).

Catalysis depends on Y23, which acts as the Proton acceptor. Substrate contacts are provided by N74, H80, and D87. H100 (proton donor) is an active-site residue. Substrate contacts are provided by residues 101–102 and R111; that span reads LS.

It belongs to the type-II 3-dehydroquinase family. Homododecamer.

It carries out the reaction 3-dehydroquinate = 3-dehydroshikimate + H2O. The protein operates within metabolic intermediate biosynthesis; chorismate biosynthesis; chorismate from D-erythrose 4-phosphate and phosphoenolpyruvate: step 3/7. Catalyzes a trans-dehydration via an enolate intermediate. This Clostridium botulinum (strain Loch Maree / Type A3) protein is 3-dehydroquinate dehydratase.